Consider the following 67-residue polypeptide: Beta-defensin 123 (67 aa).

The N-terminal stretch at 1 to 20 (MKLLLLTLTVLLLLSQLTPG) is a signal peptide. Intrachain disulfides connect C25-C52, C32-C46, and C36-C53.

Belongs to the beta-defensin family.

It localises to the secreted. Its function is as follows. Has antibacterial activity. The protein is Beta-defensin 123 (DEFB123) of Pongo pygmaeus (Bornean orangutan).